A 45-amino-acid chain; its full sequence is Large ribosomal subunit protein bL36 (45 aa).

Residues 1–45 (MKVSSSIKADPSKGDKLVRRKGRLYVINKKDPNRKQRQAGPARKK) are disordered.

It belongs to the bacterial ribosomal protein bL36 family.

The polypeptide is Large ribosomal subunit protein bL36 (Chlamydia caviae (strain ATCC VR-813 / DSM 19441 / 03DC25 / GPIC) (Chlamydophila caviae)).